The primary structure comprises 216 residues: Thylakoid lumenal 16.5 kDa protein, chloroplastic (216 aa).

The N-terminal 38 residues, 1 to 38 (MAKSLLCSSTLNPFFSTTLSSSKKNQIAYSGNSKNQTS), are a transit peptide targeting the chloroplast. The transit peptide at 39–73 (SSLLWKRRELSLGFMSSLVAIGLVSNDRRRHDANA) directs the protein to the thylakoid.

It localises to the plastid. It is found in the chloroplast thylakoid lumen. The protein is Thylakoid lumenal 16.5 kDa protein, chloroplastic of Arabidopsis thaliana (Mouse-ear cress).